Reading from the N-terminus, the 213-residue chain is UPF0301 protein RPC_0788 (213 aa).

A disordered region spans residues 1–20 (MDPKSKAPKRDETKGADDAS).

The protein belongs to the UPF0301 (AlgH) family.

The chain is UPF0301 protein RPC_0788 from Rhodopseudomonas palustris (strain BisB18).